The primary structure comprises 321 residues: Olfactory receptor 5K4 (321 aa).

Residues M1–T25 are Extracellular-facing. Residue N5 is glycosylated (N-linked (GlcNAc...) asparagine). A helical membrane pass occupies residues L26–V46. The Cytoplasmic portion of the chain corresponds to A47–R54. A helical membrane pass occupies residues L55–C75. The Extracellular segment spans residues A76–C97. C97 and C179 are joined by a disulfide. Residues M98 to M118 traverse the membrane as a helical segment. The Cytoplasmic segment spans residues A119–T139. A helical membrane pass occupies residues L140–V160. Topologically, residues G161–P205 are extracellular. A helical membrane pass occupies residues I206–F226. At K227–T240 the chain is on the cytoplasmic side. Residues C241–P261 traverse the membrane as a helical segment. Residues S262 to D268 are Extracellular-facing. A helical transmembrane segment spans residues T269–L289. Over R290 to Y321 the chain is Cytoplasmic.

Belongs to the G-protein coupled receptor 1 family.

Its subcellular location is the cell membrane. Odorant receptor. The chain is Olfactory receptor 5K4 (OR5K4) from Homo sapiens (Human).